A 1174-amino-acid polypeptide reads, in one-letter code: MSSDVPLLNDYKQDFLLKRFPQTVLGGPRLKLGYCAPPYIYVNQIVLFLMPWALGGTGTLLYQLDILRDYTAAALSGGLMVFTAAVIQLISVYARSKPVVVRRMRTRDILAEEDQHEFTSCAGAETVKFLIPGKKYVANTVFHSVLAGLVCGLGTWYLLPNRVTLLYGSPGATAVLFVFGWITLCIGEYSLIVNTATETATFQTQDTYEITPLMRPLYIFFFVSVDLAHRFIVNIPALEQMNQILHILFVLLPFLWALGTLPPPDALLFWAVEQVLEFGLGGSSMSTHLRLLVMFIVSAGAAVVSYFIPSTVGVVLFMTGLGFLLSLNPSDVSMVFRYGVTRHRVGSSHEARPGNSGHWFPWKECFLFIAVLGMALLEAGLLHHYVSVPQVSRSGAQAVVGYVLMVLLSIVWILRETQSIYIFGIFRNPFYPKDIHAVSVFYDKQNKLLKIGAVRWILLTLVSPLAMVAFLALDSSLHGLHSVSVSIGFTRAFRMVWQNTETALLETVVVSAVHMVSSTDCWWNRSLDTGIRLLLIGIMRDRLIQFITKLQFAVTVLLALWTEKKQHRKTTTTLCVLNTVFAPFVLGIIVLSTLLSSPLLPLFTLPVFLVGFPRPVQSWPGAVGTAACVCTDSVFYHQMVPRLTAALQTAMAAGSLGLLLPGSHYLGRFEDRLIWIMILECGYTYCCINVKGLELQETSCHTAEAQRVDEVFESAFQREHPQVCSLNEHLENVLTPCTVLPVKLYSDARNVLTGIIDSPDNLKEFKDDLIKVLVWVLIQHCSKRPSTQENKTENTGEASPALPPAANSSPCPESLEDSESANSDWSDGSIFDDEPAIKNRKEKLQSKDLPCTKLPIPGSVDSQNPDDHSAGTGPKNDLYRTVILGLPAVDKGQREDVAYIPLVEFSCSQSRLLSLPEEWRSNSTPRSKILEMSALFPEDWYQFVLRQLECFHSEEKSRVLEEIAKDKALKDLYVHTVMACYIGLFGIDNGVPSPGQLVRVYNGGLPWAGTLDWLSEKPELFHLVRKAFRYTLKLMVDKASLGPIEDFKELTNCLREYERDWYIGLVSEEQWKRAILEEKPCLFCLGYESSMGVYTSRVLMLQEMSVHIGKLNAEAVRGQWANLSWELLYATNDDEERYSIQAHPLLLRNLTVQAADPPLGYPIFSSKPLPIHLC.

14 consecutive transmembrane segments (helical) span residues 40–60 (IYVN…TGTL), 72–92 (AAAL…LISV), 140–160 (TVFH…YLLP), 173–193 (TAVL…SLIV), 217–237 (LYIF…NIPA), 244–264 (ILHI…LPPP), 284–304 (SMST…AAVV), 307–327 (FIPS…LLSL), 366–386 (FLFI…HHYV), 394–414 (SGAQ…VWIL), 451–471 (IGAV…VAFL), 543–563 (LIQF…LWTE), 580–600 (VFAP…SPLL), and 643–663 (LTAA…LPGS). Residues 785-797 (PSTQENKTENTGE) show a composition bias toward polar residues. A disordered region spans residues 785–875 (PSTQENKTEN…DDHSAGTGPK (91 aa)). N-linked (GlcNAc...) asparagine glycosylation is present at N790. Over residues 798-810 (ASPALPPAANSSP) the composition is skewed to low complexity. Positions 835–846 (PAIKNRKEKLQS) are enriched in basic and acidic residues. 2 N-linked (GlcNAc...) asparagine glycosylation sites follow: N1122 and N1149.

This sequence belongs to the pecanex family.

It localises to the membrane. The sequence is that of Pecanex-like protein 4 from Mus musculus (Mouse).